Here is a 152-residue protein sequence, read N- to C-terminus: Transcriptional regulator MraZ (152 aa).

SpoVT-AbrB domains are found at residues 5-52 and 81-124; these read ATLV…PLPE and ASEC…DETT.

Belongs to the MraZ family. As to quaternary structure, forms oligomers.

The protein localises to the cytoplasm. It localises to the nucleoid. Functionally, negatively regulates its own expression and that of the subsequent genes in the proximal part of the division and cell wall (dcw) gene cluster. Acts by binding directly to DNA. May also regulate the expression of genes outside the dcw cluster. The protein is Transcriptional regulator MraZ of Salmonella paratyphi A (strain ATCC 9150 / SARB42).